The chain runs to 395 residues: Tryptophan synthase beta chain (395 aa).

N6-(pyridoxal phosphate)lysine is present on lysine 86.

This sequence belongs to the TrpB family. Tetramer of two alpha and two beta chains. Pyridoxal 5'-phosphate serves as cofactor.

The catalysed reaction is (1S,2R)-1-C-(indol-3-yl)glycerol 3-phosphate + L-serine = D-glyceraldehyde 3-phosphate + L-tryptophan + H2O. Its pathway is amino-acid biosynthesis; L-tryptophan biosynthesis; L-tryptophan from chorismate: step 5/5. Its function is as follows. The beta subunit is responsible for the synthesis of L-tryptophan from indole and L-serine. The polypeptide is Tryptophan synthase beta chain (Pseudoalteromonas atlantica (strain T6c / ATCC BAA-1087)).